The sequence spans 361 residues: Glutamine synthetase (361 aa).

Residues 23–103 form the GS beta-grasp domain; sequence CQAMYIWVDG…VLCETYKYNK (81 aa). Residues 110 to 361 enclose the GS catalytic domain; that stretch reads QRWKCMEVMT…LVRTICLNEQ (252 aa). Residue glutamate 131 participates in ATP binding. Mn(2+) contacts are provided by glutamate 131, glutamate 133, and glutamate 200. Residue 200-205 coordinates ATP; the sequence is EFQVGP. 243–244 serves as a coordination point for L-glutamate; that stretch reads DW. Residue histidine 250 participates in Mn(2+) binding. ATP-binding positions include 252-254, arginine 316, and arginine 321; that span reads NFS. Arginine 316 is an L-glutamate binding site. 333–335 is an ADP binding site; the sequence is YLE. Glutamate 335 contacts Mn(2+). An L-glutamate-binding site is contributed by arginine 337.

It belongs to the glutamine synthetase family. It depends on Mg(2+) as a cofactor. Mn(2+) is required as a cofactor.

It localises to the cytoplasm. The protein resides in the cytosol. It is found in the microsome. Its subcellular location is the mitochondrion. The catalysed reaction is L-glutamate + NH4(+) + ATP = L-glutamine + ADP + phosphate + H(+). Glutamine synthetase that catalyzes the ATP-dependent conversion of glutamate and ammonia to glutamine. In Panulirus argus (Caribbean spiny lobster), this protein is Glutamine synthetase.